Reading from the N-terminus, the 219-residue chain is Protein matrimony (219 aa).

The span at 74 to 99 (PPAKAHPHPHQHQHHHHHHKHIHRTQ) shows a compositional bias: basic residues. The disordered stretch occupies residues 74–104 (PPAKAHPHPHQHQHHHHHHKHIHRTQLKPPP). The region spanning 159–219 (NHAANVEQIL…NRIMDVLQTL (61 aa)) is the SAM domain.

Interacts with polo. Interacts with cort. Post-translationally, probably ubiquitinated: degraded during the oocyte-to-embryo transition by the anaphase promoting complex/cyclosome (APC/C) containing cort protein.

It is found in the nucleus. The protein localises to the chromosome. Functionally, polo kinase inhibitor required to maintain G2 arrest in the meiotic cell cycle in females. Holds heterochromatically paired homologs together from the end of pachytene until metaphase I. Haploinsufficient locus for homologous achiasmate segregation and may be required for the maintenance of heterochromatic pairings. The chain is Protein matrimony (mtrm) from Drosophila yakuba (Fruit fly).